A 383-amino-acid polypeptide reads, in one-letter code: MRFLTAGESHGPELLAIIEGLPAGLPLSEEDINPWLEKRQKGYGRGRRMVIERDRVEFRAGVRGGRTTGAPVALAIKNADFKNWAEIMDPAPGNWPRKRALTAARPGHADLAGGMKYGHKDLRDVLERASARETAMRVAVGAVALKLLSLLGVEGVGYVPGMAGVWAKVPFSWDLVPRIEESPLRMTDPEAEAEAIRRIDQAKAEGDTLGGIIEARFRGLVPGLGSHVHWDRKLDGRLAQMALSIPAVKGVEIGPAFENAMKRGSEVHDAIYWSPERGFYRKTNRAGGLEGGMTTGEELVVRAALKPIATLMKPLPTVDVVTHEPKDAARERSDTTAVPAASVILCALSAIVLAQAYLEKFGGDTMEEIQERVERYRERVRAY.

Residues Arg-39 and Arg-45 each coordinate NADP(+). FMN contacts are provided by residues 128 to 130 (RAS), Gly-291, 306 to 310 (KPIAT), and Arg-332.

Belongs to the chorismate synthase family. In terms of assembly, homotetramer. FMNH2 is required as a cofactor.

It catalyses the reaction 5-O-(1-carboxyvinyl)-3-phosphoshikimate = chorismate + phosphate. Its pathway is metabolic intermediate biosynthesis; chorismate biosynthesis; chorismate from D-erythrose 4-phosphate and phosphoenolpyruvate: step 7/7. Functionally, catalyzes the anti-1,4-elimination of the C-3 phosphate and the C-6 proR hydrogen from 5-enolpyruvylshikimate-3-phosphate (EPSP) to yield chorismate, which is the branch point compound that serves as the starting substrate for the three terminal pathways of aromatic amino acid biosynthesis. This reaction introduces a second double bond into the aromatic ring system. The sequence is that of Chorismate synthase from Thermus thermophilus (strain ATCC 27634 / DSM 579 / HB8).